The chain runs to 219 residues: MDTWHDALGGEKQQPYFQEILNAVRQERLSGQIIYPPAADVFNAFRLTAFDRVKAVILGQDPYHGAGQAHGLAFSVRQGIRIPPSLLNIYKELETDIEGFSIPAHGCLTAWAEQGVLLLNTVLTVRAGQAHSHALLGWERFTDTVIRQLAAHRKHLVFMLWGGYAQQKRKLIDSQNHLILTAPHPSPLSAYRGFFGCRHFSQANSYLSRHGIDPINWKL.

Catalysis depends on aspartate 61, which acts as the Proton acceptor.

Belongs to the uracil-DNA glycosylase (UDG) superfamily. UNG family.

The protein localises to the cytoplasm. The catalysed reaction is Hydrolyzes single-stranded DNA or mismatched double-stranded DNA and polynucleotides, releasing free uracil.. Functionally, excises uracil residues from the DNA which can arise as a result of misincorporation of dUMP residues by DNA polymerase or due to deamination of cytosine. The sequence is that of Uracil-DNA glycosylase from Neisseria meningitidis serogroup C (strain 053442).